We begin with the raw amino-acid sequence, 680 residues long: WD repeat-containing protein 48 homolog (680 aa).

WD repeat units follow at residues 26–65 (QHRNGVNALQLDANNGKLYSAGRDAIIRVWNTRTDSSEKY), 71–110 (HHNDWVNDIVLCCNGRNLISASCDTTVKVWNAQKGFCMST), 113–152 (THRDYVQALAYAKDREQVASAGLDKAIFLWDVNTLTALTA), 164–203 (GSKDSIYSLAMNPSGTVIVSGSTENILRIWDPRTCMRIMK), 206–245 (GHTENVRCLVVSPDGNQVVSGSSDGTIKVWNLGQQRCVQT), 248–287 (VHKEGVWSLLMSENFQYIISGSRDRNIIVTEMRNPSNKTL), 290–329 (EEQAPVLSLGYNIDKTGVWATTWNSDIRCWKLPMYDRCTL), and 350–389 (KGGAAIKECAVLNDKRYIITKDSQDQVVVYDVLRVVKKEQ). A disordered region spans residues 592–616 (ETTPSGGNANNSLQNSQSDANSEGS).

It belongs to the WD repeat WDR48 family. In terms of assembly, catalytic component of the Usp12-46 deubiquitylase complex consisting of Usp12-46, Wdr20 and Uaf1; regulatory subunit that, together wtih Wdr20, stabilizes Usp12-46. The Usp12-46 deubiquitylase complex associates with arr/arrow; the interaction leads to deubiquitination and stabilization of arr/arrow.

In terms of biological role, regulatory component of the Usp12-46 deubiquitylase complex. activates deubiquitination by increasing the catalytic turnover without increasing the affinity of deubiquitinating enzymes for the substrate. The complex deubiquitylates the wg/wingless-signaling receptor arr/arrow, which stabilizes the receptor and increases its concentration at the cell surface; this enhances the sensitivity of cells to wg/wingless-signal stimulation. This increases the amplitude and spatial range of the signaling response to the wg/wingless morphogen gradient, facilitating the precise concentration-dependent regulation of its target genes. Together with Wdr20 and Usp12-46 required for wg/wingless-mediated signaling in the wing imaginal disc and for wg/wingless-dependent regulation of intestinal stem cell proliferation. The chain is WD repeat-containing protein 48 homolog from Drosophila sechellia (Fruit fly).